We begin with the raw amino-acid sequence, 816 residues long: H(+)/Cl(-) exchange transporter 5 (816 aa).

The Cytoplasmic segment spans residues 1-124; the sequence is MAMWQGAMDN…WALIHSVSDA (124 aa). Helical transmembrane passes span 125–162 and 208–231; these read FSGW…ICTG and VNYF…VKVF. The short motif at 237 to 241 is the Selectivity filter part_1 element; it reads GSGIP. Ser-238 is a binding site for chloride. The segment at residues 240–247 is an intramembrane region (helical); that stretch reads IPEIKTIL. 2 consecutive transmembrane segments (helical) span residues 256-275 and 281-300; these read LGKW…VSSG and EGPL…HRFN. The Selectivity filter part_2 motif lies at 279–283; sequence GKEGP. 2 intramembrane regions (helical) span residues 312–324 and 328–336; these read VLSA…VSVA and PIGGVLFSL. A run of 5 helical transmembrane segments spans residues 348-366, 389-414, 422-442, 498-518, and 523-542; these read LWRS…RSIN, LVPF…IAWC, LGKY…ILAF, MWQL…TFGM, and GLFI…LGVG. Positions 523 to 527 match the Selectivity filter part_3 motif; the sequence is GLFIP. Chloride is bound at residue Phe-525. An intramembrane region (helical) is located at residues 570 to 584; sequence GLYAMVGAAACLGGV. The segment at residues 585–587 is an intramembrane region (note=Loop between two helices); sequence TRM. Positions 588–599 form an intramembrane region, helical; it reads TVSLVVIMFELT. An intramembrane region (note=Loop between two helices) is located at residues 600–604; sequence GGLEY. Residues 605-622 traverse the membrane as a helical segment; sequence IVPLMAAAMTSKWVADAL. The Cytoplasmic portion of the chain corresponds to 623–816; sequence GREGIYDAHI…NQDPDSILFN (194 aa). Chloride is bound at residue Tyr-628. CBS domains are found at residues 656–720 and 752–812; these read MKPR…ARKK and ILDL…DPDS. Residues Thr-666, 687–689, and 794–797 contribute to the ATP site; these read YSG and TKKD.

Belongs to the chloride channel (TC 2.A.49) family. ClC-5/CLCN5 subfamily. As to quaternary structure, interacts with NEDD4 and NEDD4L. Post-translationally, ubiquitinated by NEDD4L in the presence of albumin; which promotes endocytosis and proteasomal degradation.

It localises to the golgi apparatus membrane. The protein resides in the endosome membrane. Its subcellular location is the cell membrane. It carries out the reaction 2 chloride(in) + H(+)(out) = 2 chloride(out) + H(+)(in). Its function is as follows. Proton-coupled chloride transporter. Functions as antiport system and exchanges chloride ions against protons. Important for normal acidification of the endosome lumen. May play an important role in renal tubular function. The CLC channel family contains both chloride channels and proton-coupled anion transporters that exchange chloride or another anion for protons. The absence of conserved gating glutamate residues is typical for family members that function as channels. The polypeptide is H(+)/Cl(-) exchange transporter 5 (CLCN5) (Oryctolagus cuniculus (Rabbit)).